A 137-amino-acid chain; its full sequence is Nucleoside diphosphate kinase (137 aa).

ATP is bound by residues lysine 10, phenylalanine 59, arginine 87, threonine 93, arginine 104, and asparagine 114. Histidine 117 (pros-phosphohistidine intermediate) is an active-site residue.

The protein belongs to the NDK family. As to quaternary structure, homotetramer. Mg(2+) serves as cofactor.

The protein resides in the cytoplasm. The enzyme catalyses a 2'-deoxyribonucleoside 5'-diphosphate + ATP = a 2'-deoxyribonucleoside 5'-triphosphate + ADP. It carries out the reaction a ribonucleoside 5'-diphosphate + ATP = a ribonucleoside 5'-triphosphate + ADP. Major role in the synthesis of nucleoside triphosphates other than ATP. The ATP gamma phosphate is transferred to the NDP beta phosphate via a ping-pong mechanism, using a phosphorylated active-site intermediate. This Streptomyces coelicolor (strain ATCC BAA-471 / A3(2) / M145) protein is Nucleoside diphosphate kinase.